A 94-amino-acid polypeptide reads, in one-letter code: Cell division topological specificity factor (94 aa).

The protein belongs to the MinE family.

Prevents the cell division inhibition by proteins MinC and MinD at internal division sites while permitting inhibition at polar sites. This ensures cell division at the proper site by restricting the formation of a division septum at the midpoint of the long axis of the cell. This Alkaliphilus metalliredigens (strain QYMF) protein is Cell division topological specificity factor.